Consider the following 393-residue polypeptide: Glutamate 5-kinase 1 (393 aa).

Lys17 is an ATP binding site. Substrate contacts are provided by Ser57, Asp144, and Asn156. 176–177 (SD) is an ATP binding site. Positions 282-359 (AGSLSIDAGA…AEIAAILGYA (78 aa)) constitute a PUA domain.

It belongs to the glutamate 5-kinase family.

The protein resides in the cytoplasm. It carries out the reaction L-glutamate + ATP = L-glutamyl 5-phosphate + ADP. The protein operates within amino-acid biosynthesis; L-proline biosynthesis; L-glutamate 5-semialdehyde from L-glutamate: step 1/2. In terms of biological role, catalyzes the transfer of a phosphate group to glutamate to form L-glutamate 5-phosphate. The protein is Glutamate 5-kinase 1 of Rhizobium meliloti (strain 1021) (Ensifer meliloti).